The primary structure comprises 239 residues: Ribonuclease PH (239 aa).

Residues arginine 86 and 124–126 (GTR) contribute to the phosphate site.

It belongs to the RNase PH family. As to quaternary structure, homohexameric ring arranged as a trimer of dimers.

It carries out the reaction tRNA(n+1) + phosphate = tRNA(n) + a ribonucleoside 5'-diphosphate. Phosphorolytic 3'-5' exoribonuclease that plays an important role in tRNA 3'-end maturation. Removes nucleotide residues following the 3'-CCA terminus of tRNAs; can also add nucleotides to the ends of RNA molecules by using nucleoside diphosphates as substrates, but this may not be physiologically important. Probably plays a role in initiation of 16S rRNA degradation (leading to ribosome degradation) during starvation. This Rickettsia akari (strain Hartford) protein is Ribonuclease PH.